The sequence spans 350 residues: Phosphotriesterase-related protein (350 aa).

A divalent metal cation is bound by residues His22, His24, Glu169, His201, His230, and Asp298.

This sequence belongs to the metallo-dependent hydrolases superfamily. Phosphotriesterase family. A divalent metal cation serves as cofactor.

The protein is Phosphotriesterase-related protein of Drosophila persimilis (Fruit fly).